The chain runs to 350 residues: 4-hydroxy-3-methylbut-2-en-1-yl diphosphate synthase (flavodoxin) (350 aa).

[4Fe-4S] cluster-binding residues include cysteine 263, cysteine 266, cysteine 298, and glutamate 305.

The protein belongs to the IspG family. Requires [4Fe-4S] cluster as cofactor.

It catalyses the reaction (2E)-4-hydroxy-3-methylbut-2-enyl diphosphate + oxidized [flavodoxin] + H2O + 2 H(+) = 2-C-methyl-D-erythritol 2,4-cyclic diphosphate + reduced [flavodoxin]. It participates in isoprenoid biosynthesis; isopentenyl diphosphate biosynthesis via DXP pathway; isopentenyl diphosphate from 1-deoxy-D-xylulose 5-phosphate: step 5/6. In terms of biological role, converts 2C-methyl-D-erythritol 2,4-cyclodiphosphate (ME-2,4cPP) into 1-hydroxy-2-methyl-2-(E)-butenyl 4-diphosphate. In Nautilia profundicola (strain ATCC BAA-1463 / DSM 18972 / AmH), this protein is 4-hydroxy-3-methylbut-2-en-1-yl diphosphate synthase (flavodoxin).